The primary structure comprises 113 residues: Ribosome-binding factor A (113 aa).

This sequence belongs to the RbfA family. As to quaternary structure, monomer. Binds 30S ribosomal subunits, but not 50S ribosomal subunits or 70S ribosomes.

The protein resides in the cytoplasm. In terms of biological role, one of several proteins that assist in the late maturation steps of the functional core of the 30S ribosomal subunit. Associates with free 30S ribosomal subunits (but not with 30S subunits that are part of 70S ribosomes or polysomes). Required for efficient processing of 16S rRNA. May interact with the 5'-terminal helix region of 16S rRNA. This is Ribosome-binding factor A from Mycoplasmopsis agalactiae (strain NCTC 10123 / CIP 59.7 / PG2) (Mycoplasma agalactiae).